Here is a 406-residue protein sequence, read N- to C-terminus: Argininosuccinate synthase (406 aa).

ATP contacts are provided by residues 11–19 (AYSGGLDTS) and Ala-38. L-citrulline contacts are provided by Tyr-91 and Ser-96. Gly-121 provides a ligand contact to ATP. L-aspartate is bound by residues Thr-123, Asn-127, and Asp-128. Residue Asn-127 participates in L-citrulline binding. The L-citrulline site is built by Arg-131, Ser-181, Ser-190, Glu-266, and Tyr-278.

This sequence belongs to the argininosuccinate synthase family. Type 1 subfamily. In terms of assembly, homotetramer.

The protein localises to the cytoplasm. It carries out the reaction L-citrulline + L-aspartate + ATP = 2-(N(omega)-L-arginino)succinate + AMP + diphosphate + H(+). The protein operates within amino-acid biosynthesis; L-arginine biosynthesis; L-arginine from L-ornithine and carbamoyl phosphate: step 2/3. In Campylobacter jejuni subsp. doylei (strain ATCC BAA-1458 / RM4099 / 269.97), this protein is Argininosuccinate synthase.